The following is a 249-amino-acid chain: DNA polymerase sliding clamp (249 aa).

This sequence belongs to the PCNA family. In terms of assembly, homotrimer. The subunits circularize to form a toroid; DNA passes through its center. Replication factor C (RFC) is required to load the toroid on the DNA.

Functionally, sliding clamp subunit that acts as a moving platform for DNA processing. Responsible for tethering the catalytic subunit of DNA polymerase and other proteins to DNA during high-speed replication. The chain is DNA polymerase sliding clamp from Methanococcus vannielii (strain ATCC 35089 / DSM 1224 / JCM 13029 / OCM 148 / SB).